The primary structure comprises 34 residues: Photosystem II reaction center protein M (34 aa).

The helical transmembrane segment at 5–25 threads the bilayer; it reads ILAFIATALFILIPTSFLLII.

The protein belongs to the PsbM family. As to quaternary structure, PSII is composed of 1 copy each of membrane proteins PsbA, PsbB, PsbC, PsbD, PsbE, PsbF, PsbH, PsbI, PsbJ, PsbK, PsbL, PsbM, PsbT, PsbX, PsbY, PsbZ, Psb30/Ycf12, at least 3 peripheral proteins of the oxygen-evolving complex and a large number of cofactors. It forms dimeric complexes. Detected in both etioplasts and green leaves; PSII is only assembled in green leaves.

Its subcellular location is the plastid. It is found in the chloroplast thylakoid membrane. In terms of biological role, one of the components of the core complex of photosystem II (PSII). PSII is a light-driven water:plastoquinone oxidoreductase that uses light energy to abstract electrons from H(2)O, generating O(2) and a proton gradient subsequently used for ATP formation. It consists of a core antenna complex that captures photons, and an electron transfer chain that converts photonic excitation into a charge separation. This subunit is found at the monomer-monomer interface. The chain is Photosystem II reaction center protein M from Hordeum vulgare (Barley).